The primary structure comprises 551 residues: Glucans biosynthesis protein D (551 aa).

Residues 1 to 32 (MDRRRFIKGSMAMAAVCGTSGIASLFSQAAFA) constitute a signal peptide (tat-type signal).

This sequence belongs to the OpgD/OpgG family. Post-translationally, predicted to be exported by the Tat system. The position of the signal peptide cleavage has not been experimentally proven.

It is found in the periplasm. The protein operates within glycan metabolism; osmoregulated periplasmic glucan (OPG) biosynthesis. Its function is as follows. Probably involved in the control of the structural glucose backbone of osmoregulated periplasmic glucans (OPGs). This Escherichia coli O9:H4 (strain HS) protein is Glucans biosynthesis protein D.